The chain runs to 479 residues: Glycogen synthase (479 aa).

K15 is an ADP-alpha-D-glucose binding site.

This sequence belongs to the glycosyltransferase 1 family. Bacterial/plant glycogen synthase subfamily.

It carries out the reaction [(1-&gt;4)-alpha-D-glucosyl](n) + ADP-alpha-D-glucose = [(1-&gt;4)-alpha-D-glucosyl](n+1) + ADP + H(+). It functions in the pathway glycan biosynthesis; glycogen biosynthesis. Functionally, synthesizes alpha-1,4-glucan chains using ADP-glucose. The polypeptide is Glycogen synthase (Clostridium novyi (strain NT)).